The sequence spans 181 residues: Transcriptional repressor NrdR (181 aa).

Residues 3–34 fold into a zinc finger; sequence CLFCQHTYTRVIDSRVSEDGATIRRRRECEAC. The ATP-cone domain occupies 49–139; it reads PVIIKKDGGR…VYRSFQDVAD (91 aa).

It belongs to the NrdR family. It depends on Zn(2+) as a cofactor.

In terms of biological role, negatively regulates transcription of bacterial ribonucleotide reductase nrd genes and operons by binding to NrdR-boxes. The chain is Transcriptional repressor NrdR from Xylella fastidiosa (strain 9a5c).